The chain runs to 217 residues: Probable transaldolase (217 aa).

Lys-83 functions as the Schiff-base intermediate with substrate in the catalytic mechanism.

It belongs to the transaldolase family. Type 3B subfamily.

It is found in the cytoplasm. The catalysed reaction is D-sedoheptulose 7-phosphate + D-glyceraldehyde 3-phosphate = D-erythrose 4-phosphate + beta-D-fructose 6-phosphate. Its pathway is carbohydrate degradation; pentose phosphate pathway; D-glyceraldehyde 3-phosphate and beta-D-fructose 6-phosphate from D-ribose 5-phosphate and D-xylulose 5-phosphate (non-oxidative stage): step 2/3. Transaldolase is important for the balance of metabolites in the pentose-phosphate pathway. The chain is Probable transaldolase from Caulobacter vibrioides (strain NA1000 / CB15N) (Caulobacter crescentus).